The sequence spans 129 residues: Transcription factor bHLH138 (129 aa).

Basic and acidic residues predominate over residues 1 to 18; it reads MERYTKKNERFKAEEGKG. The tract at residues 1–24 is disordered; it reads MERYTKKNERFKAEEGKGSKKSRT. The bHLH domain occupies 19-68; the sequence is SKKSRTFLTERERRALFNDRFFDLKNLIPNPTKGGEASIVQDGIVYINEL.

The protein belongs to the bHLH protein family.

The protein localises to the nucleus. The chain is Transcription factor bHLH138 from Arabidopsis thaliana (Mouse-ear cress).